Reading from the N-terminus, the 486-residue chain is F420-non-reducing hydrogenase iron-sulfur subunit A (486 aa).

Residues Cys61 and Cys64 each contribute to the Ni(2+) site.

This sequence belongs to the [NiFe]/[NiFeSe] hydrogenase large subunit family. As to quaternary structure, the F420-non-reducing hydrogenase is composed of three subunits; MvhA, MvhD and MvhG. It forms a complex with the heterodisulfide reductase (Hdr). Ni(2+) serves as cofactor.

The protein resides in the cytoplasm. Functionally, part of a complex that provides reducing equivalents for heterodisulfide reductase. The protein is F420-non-reducing hydrogenase iron-sulfur subunit A (mvhA) of Archaeoglobus profundus (strain DSM 5631 / JCM 9629 / NBRC 100127 / Av18).